We begin with the raw amino-acid sequence, 229 residues long: Adenosylcobinamide-GDP ribazoletransferase (229 aa).

6 helical membrane passes run 31 to 51 (AMLL…AVLA), 55 to 75 (AVEL…AASS), 111 to 131 (AGVL…ATLL), 134 to 154 (PLLA…VCCT), 176 to 196 (VAVL…LVLV), and 208 to 228 (GDVM…AWAA).

The protein belongs to the CobS family. Mg(2+) is required as a cofactor.

It is found in the cell membrane. It catalyses the reaction alpha-ribazole + adenosylcob(III)inamide-GDP = adenosylcob(III)alamin + GMP + H(+). The enzyme catalyses alpha-ribazole 5'-phosphate + adenosylcob(III)inamide-GDP = adenosylcob(III)alamin 5'-phosphate + GMP + H(+). It participates in cofactor biosynthesis; adenosylcobalamin biosynthesis; adenosylcobalamin from cob(II)yrinate a,c-diamide: step 7/7. In terms of biological role, joins adenosylcobinamide-GDP and alpha-ribazole to generate adenosylcobalamin (Ado-cobalamin). Also synthesizes adenosylcobalamin 5'-phosphate from adenosylcobinamide-GDP and alpha-ribazole 5'-phosphate. This is Adenosylcobinamide-GDP ribazoletransferase from Nocardioides sp. (strain ATCC BAA-499 / JS614).